We begin with the raw amino-acid sequence, 269 residues long: Shikimate dehydrogenase (NADP(+)) (269 aa).

Residues 15–17 (SLS) and Thr-62 contribute to the shikimate site. The Proton acceptor role is filled by Lys-66. Shikimate is bound by residues Asn-86 and Asp-99. NADP(+) is bound by residues 123-127 (GAGGA), 146-151 (NRTTAK), and Leu-213. Residue Tyr-215 participates in shikimate binding. Gly-236 contributes to the NADP(+) binding site.

Belongs to the shikimate dehydrogenase family. In terms of assembly, homodimer.

It carries out the reaction shikimate + NADP(+) = 3-dehydroshikimate + NADPH + H(+). It participates in metabolic intermediate biosynthesis; chorismate biosynthesis; chorismate from D-erythrose 4-phosphate and phosphoenolpyruvate: step 4/7. Its function is as follows. Involved in the biosynthesis of the chorismate, which leads to the biosynthesis of aromatic amino acids. Catalyzes the reversible NADPH linked reduction of 3-dehydroshikimate (DHSA) to yield shikimate (SA). This Methanocella arvoryzae (strain DSM 22066 / NBRC 105507 / MRE50) protein is Shikimate dehydrogenase (NADP(+)).